The chain runs to 449 residues: Na(+)-translocating NADH-quinone reductase subunit A (449 aa).

It belongs to the NqrA family. As to quaternary structure, composed of six subunits; NqrA, NqrB, NqrC, NqrD, NqrE and NqrF.

The enzyme catalyses a ubiquinone + n Na(+)(in) + NADH + H(+) = a ubiquinol + n Na(+)(out) + NAD(+). Functionally, NQR complex catalyzes the reduction of ubiquinone-1 to ubiquinol by two successive reactions, coupled with the transport of Na(+) ions from the cytoplasm to the periplasm. NqrA to NqrE are probably involved in the second step, the conversion of ubisemiquinone to ubiquinol. The protein is Na(+)-translocating NADH-quinone reductase subunit A of Serratia proteamaculans (strain 568).